A 1375-amino-acid polypeptide reads, in one-letter code: MAQATPYSYTERKRIRKSFGKRENVLGVPYLLTMQKDSYVAFLQKDVPPQKRKPEGLQAAFLSAFPIVSHNGFVEMKYIEFNMAKPAFDTRECQQRGLTYAAAVRAKLQMIIYDRETSTSQSKVVKEIKEQEVYMGEVPLMTDYGSFIVNGTERVIVSQLHRSPGVFFEHDKGKTHSSGKLLFSARIIPYRGSWLDFEFDPKDILYFRVDRRRKMPVTILLKAIGLNPEQILANFFVFDNFRLMDSGAQMEFVADRLRGEIARFDLTDKAGAVIVEKDKRITARHTRALEASGTSFISVPEDFLVGRVLAKNMVDADTGEIIAKANDELTDSLLKKLRTAGIKDIQCLYTNELDMGAYISQTLASDETADELAARVAIYRMMRPGEPPTEDAVQALFNRLFYSEDTYDLSRVGRMKFNARVGRDTAEGRMVLANDDILDVVKILVELRNGRGEVDDIDHLGNRRVRCVGELAENQYRSGLARIEKAVKERLGQAETEALMPHDLINSKPISAALKEFFGASQLSQFMDQTNPLSEITHKRRVSALGPGGLTRERAGFEVRDVHPTHYGRVCPIETPEGPNIGLINSLALYAQLNEYGFLETPYRRVIDSKVTDQIDYLSAIEEGKYVIAQANAGLDKDGKLIDELVSARESGESVLTSPERIQYMDVAPTQIVSVAASLVPFLEHDDANRALMGANMQRQAVPVLRPEKAFVGTGVERVSAVDSGTVVTAKRGGVVDYIDTNRIVIRVNDAETVAGEVGVDIYNLIKYQRSNQNTNIHQRPIVQRGDQVGAGDVIADGASTDIGELALGQNMLVAFMPWNGYNFEDSILISERVVADDRYTSIHIEELVVMARDTKLGSEEITRDIPNLSEQQLGRLDESGIVYIGAEVNPGDVLVGKVTPKGETTLTPEEKLLRAIFGEKASDVKDTSLRVDQGTNGTVIDVQVFTREGIQRDKRAQQIIDDELKRFRLDLNDQLRIVEADAFDRIEKLLAGKTANGGPNKLAKGTPIDKAYLASVDKYHWFDIRPADDDIANQLESIKNSLEQTRHSFDLAFEEKRKKLTQGDELPAGVLKMVKVYLAVKRRLQPGDKMAGRHGNKGVVSKIVPVEDMPYMADGTPCDIVLNPLGVPSRMNVGQVLEVHLGWAAKGIGQRIGDLLQQEAKIADVRKFLDELYNKSGGKSEGLNGLSDAEITEMATNLAQGVPFATPVFDGATEEEIRAMMHLAYPDEIAAAKGLNATRTQATLHDGRTGDAFERPVTVGYMHVLKLHHLVDDKMHARSTGPYSLVTQQPLGGKAQFGGQRFGEMEVWALEAYGASYVLQEMLTVKSDDVNGRTKVYESIVKGEHAIEAGMPESFNVLVKEIRSLGIDIELERN.

The protein belongs to the RNA polymerase beta chain family. In terms of assembly, the RNAP catalytic core consists of 2 alpha, 1 beta, 1 beta' and 1 omega subunit. When a sigma factor is associated with the core the holoenzyme is formed, which can initiate transcription.

It carries out the reaction RNA(n) + a ribonucleoside 5'-triphosphate = RNA(n+1) + diphosphate. DNA-dependent RNA polymerase catalyzes the transcription of DNA into RNA using the four ribonucleoside triphosphates as substrates. The chain is DNA-directed RNA polymerase subunit beta from Methylibium petroleiphilum (strain ATCC BAA-1232 / LMG 22953 / PM1).